A 962-amino-acid chain; its full sequence is Cohesin subunit psc3 (962 aa).

Residues 1 to 72 (MSESVTTGSD…GVNVKRSRRN (72 aa)) form a disordered region. Over residues 21–30 (VMLSQSFDPM) the composition is skewed to polar residues. Residues 51–71 (SSKKRHPRPNSKGVNVKRSRR) show a composition bias toward basic residues. Residues 236–275 (LCEKSKELLNEHAIATKQLEKEEKRSRVNRNRINELNNSL) adopt a coiled-coil conformation. In terms of domain architecture, SCD spans 297 to 382 (FVHRYRDVEP…SRFKERILEM (86 aa)).

The protein belongs to the SCC3 family. In terms of assembly, cohesin complexes are composed of the psm1/smc1 and psm3/smc3 heterodimer attached via their hinge domain, rad21/scc1 which link them, and psc3/scc3, which interacts with rad21. Interacts with swi6. The interaction with swi6 may contribute to recruit cohesin complex to heterochromatin.

The protein localises to the nucleus. It localises to the chromosome. It is found in the centromere. Functionally, component of cohesin complex, a complex required for the cohesion of sister chromatids after DNA replication. The cohesin complex apparently forms a large proteinaceous ring within which sister chromatids can be trapped. At anaphase, the rad21 subunit of the cohesin complex is cleaved and dissociates from chromatin, allowing sister chromatids to segregate. The cohesin complex may also play a role in spindle pole assembly during mitosis. This chain is Cohesin subunit psc3 (psc3), found in Schizosaccharomyces pombe (strain 972 / ATCC 24843) (Fission yeast).